Reading from the N-terminus, the 197-residue chain is Female-specific protein transformer (197 aa).

Basic and acidic residues-rich tracts occupy residues 1–17 and 24–39; these read MKMD…DSRG and RERE…DSRK. Disordered stretches follow at residues 1–136 and 158–197; these read MKMD…PKII and GYQR…RPPY. Basic residues-rich tracts occupy residues 58–75 and 84–127; these read RRLR…RSRS and SRHR…RSPH. Over residues 163-172 the composition is skewed to pro residues; sequence PRPPPFPPAP.

It is found in the nucleus speckle. Member of the regulatory pathway controlling female somatic sexual differentiation, regulated by Sxl. Activates dsx female-specific splicing by promoting the formation of a splicing enhancer complex which consists of tra, tra2 and sr proteins. Together with tra-2, plays a role in switching fru splicing from the male-specific pattern to the female-specific pattern through activation of the female-specific fru 5'-splice site. No known function in males. This is Female-specific protein transformer (tra) from Drosophila melanogaster (Fruit fly).